The following is a 142-amino-acid chain: Transcriptional regulator MraZ (142 aa).

2 consecutive SpoVT-AbrB domains span residues 5–51 (ASAL…PRPE) and 77–120 (AMDV…DAQT).

The protein belongs to the MraZ family. Forms oligomers.

It localises to the cytoplasm. The protein localises to the nucleoid. The polypeptide is Transcriptional regulator MraZ (Paraburkholderia xenovorans (strain LB400)).